We begin with the raw amino-acid sequence, 96 residues long: Protein Vpr (96 aa).

The tract at residues 1–42 is homooligomerization; that stretch reads MEQAPEDQGPQREPYNEWTLELLEELKSEAVRHFPRLWLHSL. Phosphoserine; by host is present on residues Ser79, Ser94, and Ser96.

This sequence belongs to the HIV-1 VPR protein family. In terms of assembly, homooligomer, may form homodimer. Interacts with p6-gag region of the Pr55 Gag precursor protein through a (Leu-X-X)4 motif near the C-terminus of the P6gag protein. Interacts with host UNG. May interact with host RAD23A/HHR23A. Interacts with host VPRBP/DCAF1, leading to hijack the CUL4A-RBX1-DDB1-DCAF1/VPRBP complex, mediating ubiquitination of host proteins such as TERT and ZGPAT and arrest of the cell cycle in G2 phase. Phosphorylated on several residues by host. These phosphorylations regulate VPR activity for the nuclear import of the HIV-1 pre-integration complex.

Its subcellular location is the virion. It localises to the host nucleus. The protein localises to the host extracellular space. Its function is as follows. During virus replication, may deplete host UNG protein, and incude G2-M cell cycle arrest. Acts by targeting specific host proteins for degradation by the 26S proteasome, through association with the cellular CUL4A-DDB1 E3 ligase complex by direct interaction with host VPRPB/DCAF-1. Cell cycle arrest reportedly occurs within hours of infection and is not blocked by antiviral agents, suggesting that it is initiated by the VPR carried into the virion. Additionally, VPR induces apoptosis in a cell cycle dependent manner suggesting that these two effects are mechanistically linked. Detected in the serum and cerebrospinal fluid of AIDS patient, VPR may also induce cell death to bystander cells. Functionally, during virus entry, plays a role in the transport of the viral pre-integration (PIC) complex to the host nucleus. This function is crucial for viral infection of non-dividing macrophages. May act directly at the nuclear pore complex, by binding nucleoporins phenylalanine-glycine (FG)-repeat regions. The polypeptide is Protein Vpr (Human immunodeficiency virus type 1 group M subtype B (isolate RF/HAT3) (HIV-1)).